Here is a 65-residue protein sequence, read N- to C-terminus: Large ribosomal subunit protein bL35 (65 aa).

This sequence belongs to the bacterial ribosomal protein bL35 family.

This Thermus thermophilus (strain ATCC BAA-163 / DSM 7039 / HB27) protein is Large ribosomal subunit protein bL35.